Consider the following 379-residue polypeptide: UDP-4-amino-4-deoxy-L-arabinose--oxoglutarate aminotransferase (379 aa).

The residue at position 182 (K182) is an N6-(pyridoxal phosphate)lysine.

This sequence belongs to the DegT/DnrJ/EryC1 family. ArnB subfamily. In terms of assembly, homodimer. Pyridoxal 5'-phosphate serves as cofactor.

The enzyme catalyses UDP-4-amino-4-deoxy-beta-L-arabinose + 2-oxoglutarate = UDP-beta-L-threo-pentopyranos-4-ulose + L-glutamate. The protein operates within nucleotide-sugar biosynthesis; UDP-4-deoxy-4-formamido-beta-L-arabinose biosynthesis; UDP-4-deoxy-4-formamido-beta-L-arabinose from UDP-alpha-D-glucuronate: step 2/3. It participates in bacterial outer membrane biogenesis; lipopolysaccharide biosynthesis. Catalyzes the conversion of UDP-4-keto-arabinose (UDP-Ara4O) to UDP-4-amino-4-deoxy-L-arabinose (UDP-L-Ara4N). The modified arabinose is attached to lipid A and is required for resistance to polymyxin and cationic antimicrobial peptides. This chain is UDP-4-amino-4-deoxy-L-arabinose--oxoglutarate aminotransferase, found in Escherichia fergusonii (strain ATCC 35469 / DSM 13698 / CCUG 18766 / IAM 14443 / JCM 21226 / LMG 7866 / NBRC 102419 / NCTC 12128 / CDC 0568-73).